The chain runs to 629 residues: Dual specificity tyrosine-phosphorylation-regulated kinase 1B (629 aa).

Tyr-63 is subject to Phosphotyrosine. Residues Lys-67–Lys-86 form a disordered region. The short motif at Arg-69–Lys-86 is the Bipartite nuclear localization signal element. Phosphotyrosine is present on residues Tyr-92 and Tyr-111. The 321-residue stretch at Tyr-111–Phe-431 folds into the Protein kinase domain. Residue Ile-117 to Val-125 coordinates ATP. Tyr-129 carries the phosphotyrosine modification. An ATP-binding site is contributed by Lys-140. Tyr-171 bears the Phosphotyrosine mark. Phe-190–Leu-193 is a binding site for ATP. Asp-239 acts as the Proton acceptor in catalysis. Ser-262 is modified (phosphoserine). Tyr-271 carries the phosphotyrosine; by autocatalysis modification. Phosphotyrosine is present on Tyr-273. The segment at Gly-380–Ala-399 is disordered. The residue at position 401 (Tyr-401) is a Phosphotyrosine. Disordered stretches follow at residues Asp-436–Asn-480 and Pro-496–Ser-629. Residues Ala-438–Ser-477 show a composition bias toward low complexity. The interaction with RANBP9 stretch occupies residues Asn-480–Asp-520. 2 stretches are compositionally biased toward pro residues: residues Pro-552–Glu-562 and Asp-574–Gln-585. The residue at position 624 (Ser-624) is a Phosphoserine.

Belongs to the protein kinase superfamily. CMGC Ser/Thr protein kinase family. MNB/DYRK subfamily. In terms of assembly, dimer. Interacts with DCOHM, MAP2K3/MKK3, RANBP9 and TCF1/HNF1A. Part of a complex consisting of RANBP9, RAN, DYRK1B and COPS5. Interacts with DCAF7. Interacts with RNF169. In terms of processing, phosphorylated by MAP kinase. Tyrosine phosphorylation may be required for dimerization. Isoform 1 and isoform 2 are broadly expressed. Isoform 3 seems specific for skeletal muscle (at protein level).

It is found in the nucleus. The protein resides in the nucleolus. The protein localises to the chromosome. It carries out the reaction L-seryl-[protein] + ATP = O-phospho-L-seryl-[protein] + ADP + H(+). The enzyme catalyses L-threonyl-[protein] + ATP = O-phospho-L-threonyl-[protein] + ADP + H(+). The catalysed reaction is L-tyrosyl-[protein] + ATP = O-phospho-L-tyrosyl-[protein] + ADP + H(+). With respect to regulation, inhibited by RANBP9. Dual-specificity kinase which possesses both serine/threonine and tyrosine kinase activities. Plays an essential role in ribosomal DNA (rDNA) double-strand break repair and rDNA copy number maintenance. During DNA damage, mediates transcription silencing in part via phosphorylating and enforcing DSB accumulation of the histone methyltransferase EHMT2. Enhances the transcriptional activity of TCF1/HNF1A and FOXO1. Inhibits epithelial cell migration. Mediates colon carcinoma cell survival in mitogen-poor environments. Inhibits the SHH and WNT1 pathways, thereby enhancing adipogenesis. In addition, promotes expression of the gluconeogenic enzyme glucose-6-phosphatase catalytic subunit 1 (G6PC1). The protein is Dual specificity tyrosine-phosphorylation-regulated kinase 1B (Dyrk1b) of Mus musculus (Mouse).